The primary structure comprises 285 residues: Shikimate dehydrogenase (NADP(+)) (285 aa).

Shikimate-binding positions include 22 to 24 (SRS) and Thr-71. Lys-75 acts as the Proton acceptor in catalysis. Residues Asn-96 and Asp-111 each contribute to the shikimate site. Residues 136 to 140 (GAGGA), 160 to 165 (NRTVGR), and Ile-225 each bind NADP(+). Residue Tyr-227 coordinates shikimate. Gly-248 contacts NADP(+).

The protein belongs to the shikimate dehydrogenase family. As to quaternary structure, homodimer.

It catalyses the reaction shikimate + NADP(+) = 3-dehydroshikimate + NADPH + H(+). Its pathway is metabolic intermediate biosynthesis; chorismate biosynthesis; chorismate from D-erythrose 4-phosphate and phosphoenolpyruvate: step 4/7. In terms of biological role, involved in the biosynthesis of the chorismate, which leads to the biosynthesis of aromatic amino acids. Catalyzes the reversible NADPH linked reduction of 3-dehydroshikimate (DHSA) to yield shikimate (SA). In Rhizobium etli (strain CIAT 652), this protein is Shikimate dehydrogenase (NADP(+)).